We begin with the raw amino-acid sequence, 802 residues long: Bifunctional purine biosynthetic protein ADE5,7 (802 aa).

A GARS region spans residues 1 to 450 (MLNILVLGNG…QNSESSKVAI (450 aa)). One can recognise an ATP-grasp domain in the interval 114–330 (KRFMSKHNIP…LAQVFLAAAE (217 aa)). 141–203 (QAHTDKAFVI…EQFLEGDEIS (63 aa)) is a binding site for ATP. Mg(2+) contacts are provided by Glu-298 and Asn-300. Positions 451 to 802 (TYADSGVSVD…CVIENGTKLY (352 aa)) are AIRS. A phosphoserine mark is found at Ser-455 and Ser-458.

It in the N-terminal section; belongs to the GARS family. In the C-terminal section; belongs to the AIR synthase family. The cofactor is Mg(2+). Requires Mn(2+) as cofactor.

It is found in the cytoplasm. The catalysed reaction is 5-phospho-beta-D-ribosylamine + glycine + ATP = N(1)-(5-phospho-beta-D-ribosyl)glycinamide + ADP + phosphate + H(+). It carries out the reaction 2-formamido-N(1)-(5-O-phospho-beta-D-ribosyl)acetamidine + ATP = 5-amino-1-(5-phospho-beta-D-ribosyl)imidazole + ADP + phosphate + H(+). It functions in the pathway purine metabolism; IMP biosynthesis via de novo pathway; 5-amino-1-(5-phospho-D-ribosyl)imidazole from N(2)-formyl-N(1)-(5-phospho-D-ribosyl)glycinamide: step 2/2. It participates in purine metabolism; IMP biosynthesis via de novo pathway; N(1)-(5-phospho-D-ribosyl)glycinamide from 5-phospho-alpha-D-ribose 1-diphosphate: step 2/2. In terms of biological role, catalyzes the second and fifth step in the 'de novo' purine biosynthesis pathway; contains phosphoribosylamine--glycine ligase (GARS) and phosphoribosylformylglycinamidine cyclo-ligase (AIRS) activities. The protein is Bifunctional purine biosynthetic protein ADE5,7 of Saccharomyces cerevisiae (strain ATCC 204508 / S288c) (Baker's yeast).